Here is a 183-residue protein sequence, read N- to C-terminus: Crossover junction endodeoxyribonuclease RuvC (183 aa).

Catalysis depends on residues D7, E66, and D138. Residues D7, E66, and D138 each coordinate Mg(2+).

Belongs to the RuvC family. As to quaternary structure, homodimer which binds Holliday junction (HJ) DNA. The HJ becomes 2-fold symmetrical on binding to RuvC with unstacked arms; it has a different conformation from HJ DNA in complex with RuvA. In the full resolvosome a probable DNA-RuvA(4)-RuvB(12)-RuvC(2) complex forms which resolves the HJ. Mg(2+) serves as cofactor.

It is found in the cytoplasm. It carries out the reaction Endonucleolytic cleavage at a junction such as a reciprocal single-stranded crossover between two homologous DNA duplexes (Holliday junction).. Functionally, the RuvA-RuvB-RuvC complex processes Holliday junction (HJ) DNA during genetic recombination and DNA repair. Endonuclease that resolves HJ intermediates. Cleaves cruciform DNA by making single-stranded nicks across the HJ at symmetrical positions within the homologous arms, yielding a 5'-phosphate and a 3'-hydroxyl group; requires a central core of homology in the junction. The consensus cleavage sequence is 5'-(A/T)TT(C/G)-3'. Cleavage occurs on the 3'-side of the TT dinucleotide at the point of strand exchange. HJ branch migration catalyzed by RuvA-RuvB allows RuvC to scan DNA until it finds its consensus sequence, where it cleaves and resolves the cruciform DNA. The protein is Crossover junction endodeoxyribonuclease RuvC of Burkholderia ambifaria (strain MC40-6).